A 525-amino-acid chain; its full sequence is Cysteine--tRNA ligase (525 aa).

C49 provides a ligand contact to Zn(2+). The short motif at 51-61 is the 'HIGH' region element; the sequence is VTVYDLCHLGH. Zn(2+) contacts are provided by C258, H283, and E287. The short motif at 315–319 is the 'KMSKS' region element; it reads KMSKS. Position 318 (K318) interacts with ATP.

Belongs to the class-I aminoacyl-tRNA synthetase family. As to quaternary structure, monomer. Requires Zn(2+) as cofactor.

The protein localises to the cytoplasm. The enzyme catalyses tRNA(Cys) + L-cysteine + ATP = L-cysteinyl-tRNA(Cys) + AMP + diphosphate. The chain is Cysteine--tRNA ligase from Synechococcus sp. (strain JA-2-3B'a(2-13)) (Cyanobacteria bacterium Yellowstone B-Prime).